The primary structure comprises 89 residues: Cell division topological specificity factor (89 aa).

It belongs to the MinE family.

Prevents the cell division inhibition by proteins MinC and MinD at internal division sites while permitting inhibition at polar sites. This ensures cell division at the proper site by restricting the formation of a division septum at the midpoint of the long axis of the cell. The protein is Cell division topological specificity factor of Klebsiella pneumoniae subsp. pneumoniae (strain ATCC 700721 / MGH 78578).